We begin with the raw amino-acid sequence, 149 residues long: D-aminoacyl-tRNA deacylase (149 aa).

The Gly-cisPro motif, important for rejection of L-amino acids signature appears at 139-140 (GP).

It belongs to the DTD family. As to quaternary structure, homodimer.

It localises to the cytoplasm. It carries out the reaction glycyl-tRNA(Ala) + H2O = tRNA(Ala) + glycine + H(+). The catalysed reaction is a D-aminoacyl-tRNA + H2O = a tRNA + a D-alpha-amino acid + H(+). Its function is as follows. An aminoacyl-tRNA editing enzyme that deacylates mischarged D-aminoacyl-tRNAs. Also deacylates mischarged glycyl-tRNA(Ala), protecting cells against glycine mischarging by AlaRS. Acts via tRNA-based rather than protein-based catalysis; rejects L-amino acids rather than detecting D-amino acids in the active site. By recycling D-aminoacyl-tRNA to D-amino acids and free tRNA molecules, this enzyme counteracts the toxicity associated with the formation of D-aminoacyl-tRNA entities in vivo and helps enforce protein L-homochirality. The sequence is that of D-aminoacyl-tRNA deacylase (DTD1) from Candida glabrata (strain ATCC 2001 / BCRC 20586 / JCM 3761 / NBRC 0622 / NRRL Y-65 / CBS 138) (Yeast).